A 459-amino-acid chain; its full sequence is FAD-dependent monooxygenase CTB5 (459 aa).

Residues 10–187 (SDLHPSCIAL…TAVTLKAFEQ (178 aa)) form the FAD-binding PCMH-type domain.

The protein belongs to the oxygen-dependent FAD-linked oxidoreductase family.

The protein operates within mycotoxin biosynthesis. In terms of biological role, FAD-dependent monooxygenase; part of the gene cluster that mediates the biosynthesis of cercosporin, a light-activated, non-host-selective toxin. The perylenequinone chromophore of cercosporin absorbs light energy to attain an electronically-activated triplet state and produces active oxygen species such as the hydroxyl radical, superoxide, hydrogen peroxide or singlet oxygen upon reaction with oxygen molecules. These reactive oxygen species cause damage to various cellular components including lipids, proteins and nucleic acids. The first step of cercosporin biosynthesis is performed by the polyketide synthase CTB1 which catalyzes the formation of nor-toralactone. The starter unit acyltransferase (SAT) domain of CTB1 initiates polyketide extension by the selective utilization of acetyl-CoA, which is elongated to the heptaketide in the beta-ketoacyl synthase (KS) domain by successive condensations with six malonyl units introduced by the malonyl acyltransferase (MAT) domain. The product template (PT) domain catalyzes C4-C9 and C2-C11 aldol cyclizations and dehydrations to a trihydroxynaphthalene, which is thought to be delivered to the thioesterase (TE) domain for product release. The bifunctional enzyme CTB3 then methylates nor-toralactone to toralactone before conducting an unusual oxidative aromatic ring opening. The O-methyltransferase CTB2 further methylates the nascent OH-6 of the CBT3 product, blocking further oxidation at this site before the reductase CTB6 reduces the 2-oxopropyl ketone at position C7, giving naphthalene. The FAD-dependent monooxygenase CTB5 in concert with the multicopper oxidase CTB12 are responsible for homodimerization of naphthalene with CTB7 installing the dioxepine moiety, finally producing cercosporin. The fasciclin domain-containing protein CTB11 might act with CTB5 and CTB12 whereas the roles of CTB9 and CTB10 have still to be elucidated. The polypeptide is FAD-dependent monooxygenase CTB5 (Cercospora nicotianae (Barn spot disease fungus)).